The chain runs to 746 residues: H(+)/Cl(-) exchange transporter 5 (746 aa).

Over 1–54 the chain is Cytoplasmic; that stretch reads MDFLEEPIPGVGTYDDFNTIDWVREKSRDRDRHREITNRSKESTWALIHSVSDA. Helical transmembrane passes span 55 to 92 and 138 to 161; these read FSGWLLMLLIGLLSGSLAGLIDISAHWMTDLKEGICTE and VNYFMYVLWALLFAFLAVSLVKVF. A Selectivity filter part_1 motif is present at residues 167-171; sequence GSGIP. Ser168 contributes to the chloride binding site. Positions 170-177 form an intramembrane region, helical; sequence IPEIKTIL. 2 helical membrane passes run 186-205 and 211-230; these read LGKWTLIIKTITLVLAVSSG and EGPLVHVACCCGNILCHCFN. The Selectivity filter part_2 signature appears at 209–213; that stretch reads GKEGP. 2 consecutive intramembrane regions (helical) follow at residues 242-254 and 258-266; these read VLSAAAAAGVSVA and PIGGVLFSL. The next 5 helical transmembrane spans lie at 278–296, 319–344, 352–372, 428–448, and 453–472; these read LWRSFFAALVAAFTLRSIN, LVPFILLGIFGGLWGALFIRTNIAWC, LGKYPVIEVLIVTAITAILAF, MWQLALTLILKIVITIFTFGM, and GLFIPSMAVGAIAGRLLGVG. The Selectivity filter part_3 signature appears at 453 to 457; it reads GLFIP. Chloride is bound at residue Phe455. Residues 500 to 514 constitute an intramembrane region (helical); the sequence is GLYAMVGAAACLGGV. Positions 515-517 form an intramembrane region, note=Loop between two helices; it reads TRM. The segment at residues 518–529 is an intramembrane region (helical); sequence TVSLVVIMFELT. Positions 530-534 form an intramembrane region, note=Loop between two helices; the sequence is GGLEY. A helical membrane pass occupies residues 535–552; it reads IVPLMAAAMTSKWVADAL. Over 553 to 746 the chain is Cytoplasmic; it reads GREGIYDAHI…NQDPDSILFN (194 aa). Tyr558 is a chloride binding site. CBS domains are found at residues 586–650 and 682–742; these read MKPR…ARKE and ILDL…DPDS. ATP is bound by residues Thr596, 617-619, and 724-727; these read YSG and TKKD.

It belongs to the chloride channel (TC 2.A.49) family. ClC-5/CLCN5 subfamily. As to quaternary structure, interacts with NEDD4 and NEDD4L. In terms of processing, ubiquitinated by NEDD4L in the presence of albumin; which promotes endocytosis and proteasomal degradation. As to expression, detected in duodenum, jejunum and ileum. Detected in crypt and villus regions of the epithelium of the small intestine.

The protein localises to the golgi apparatus membrane. It localises to the endosome membrane. The protein resides in the cell membrane. The catalysed reaction is 2 chloride(in) + H(+)(out) = 2 chloride(out) + H(+)(in). Functionally, proton-coupled chloride transporter. Functions as antiport system and exchanges chloride ions against protons. Important for normal acidification of the endosome lumen. May play an important role in renal tubular function. The CLC channel family contains both chloride channels and proton-coupled anion transporters that exchange chloride or another anion for protons. The absence of conserved gating glutamate residues is typical for family members that function as channels. This Cavia porcellus (Guinea pig) protein is H(+)/Cl(-) exchange transporter 5 (CLCN5).